The sequence spans 378 residues: Glutamate 5-kinase (378 aa).

Residue Lys-20 participates in ATP binding. Substrate is bound by residues Ser-60, Asp-147, and Asn-159. ATP contacts are provided by residues 179–180 and 221–227; these read TD and TGGMLTK. Residues 286–364 enclose the PUA domain; the sequence is RGRVVLDDGA…SQIARILGSM (79 aa).

Belongs to the glutamate 5-kinase family.

The protein localises to the cytoplasm. It carries out the reaction L-glutamate + ATP = L-glutamyl 5-phosphate + ADP. It participates in amino-acid biosynthesis; L-proline biosynthesis; L-glutamate 5-semialdehyde from L-glutamate: step 1/2. In terms of biological role, catalyzes the transfer of a phosphate group to glutamate to form L-glutamate 5-phosphate. This is Glutamate 5-kinase from Bordetella parapertussis (strain 12822 / ATCC BAA-587 / NCTC 13253).